We begin with the raw amino-acid sequence, 367 residues long: Sulfate/thiosulfate import ATP-binding protein CysA 2 (367 aa).

Residues Val-3–Ile-237 form the ABC transporter domain. ATP is bound at residue Gly-35–Thr-42.

The protein belongs to the ABC transporter superfamily. Sulfate/tungstate importer (TC 3.A.1.6) family. As to quaternary structure, the complex is composed of two ATP-binding proteins (CysA), two transmembrane proteins (CysT and CysW) and a solute-binding protein (CysP).

Its subcellular location is the cell inner membrane. It carries out the reaction sulfate(out) + ATP + H2O = sulfate(in) + ADP + phosphate + H(+). The enzyme catalyses thiosulfate(out) + ATP + H2O = thiosulfate(in) + ADP + phosphate + H(+). In terms of biological role, part of the ABC transporter complex CysAWTP involved in sulfate/thiosulfate import. Responsible for energy coupling to the transport system. This is Sulfate/thiosulfate import ATP-binding protein CysA 2 from Rhizobium meliloti (strain 1021) (Ensifer meliloti).